The following is a 99-amino-acid chain: Large ribosomal subunit protein uL23 (99 aa).

It belongs to the universal ribosomal protein uL23 family. Part of the 50S ribosomal subunit. Contacts protein L29, and trigger factor when it is bound to the ribosome.

One of the early assembly proteins it binds 23S rRNA. One of the proteins that surrounds the polypeptide exit tunnel on the outside of the ribosome. Forms the main docking site for trigger factor binding to the ribosome. This chain is Large ribosomal subunit protein uL23, found in Clavibacter michiganensis subsp. michiganensis (strain NCPPB 382).